The chain runs to 155 residues: Ribosomal RNA large subunit methyltransferase H (155 aa).

S-adenosyl-L-methionine-binding positions include L73, G104, and 123 to 128 (LSPLTL).

It belongs to the RNA methyltransferase RlmH family. Homodimer.

It localises to the cytoplasm. The enzyme catalyses pseudouridine(1915) in 23S rRNA + S-adenosyl-L-methionine = N(3)-methylpseudouridine(1915) in 23S rRNA + S-adenosyl-L-homocysteine + H(+). Specifically methylates the pseudouridine at position 1915 (m3Psi1915) in 23S rRNA. This chain is Ribosomal RNA large subunit methyltransferase H, found in Pseudomonas aeruginosa (strain UCBPP-PA14).